A 437-amino-acid chain; its full sequence is MKSALCIALALTWSLLVQAARQTVLAVADHDIGGYSTFLQSLTDRDFDVKTSYIKDESAKLFEYGERLYDNLILLSSQSKSLGPVFSPKSLLEFVQSGGNLFVVAGSQLPEGIRELGRQLDMFLAERQSVVVDHFNHAEGSDDIILLDGISENPYIISDETRAAGPILYKGIGHYLGPNPQTQPILRGNPTSYIYNTKTEAEVSKNPWAAGTQLFLVSVLQSSTGERVGLSGSIDMLKDEYLSPQSPSFSKSNFLFARDLTNWVFQRKGVLQATNMTYGKVAEPLESRNASCYRIKDEMIFSIDISLLEDGQQTPYVADDVQLELIMLDPYYRVNLVPVPSDSQTSQHYEAVLVAPDHYGDFTFKIEYKRPGLTPIEEKSTFTLRQFFHNEFPRFLPHAYPYYASCFSVLGAFLLFCGIWLLQKPAKPVVPSAKKQN.

The first 19 residues, methionine 1–alanine 19, serve as a signal peptide directing secretion. Residues alanine 20–proline 401 lie on the Lumenal side of the membrane. Residues asparagine 275 and asparagine 289 are each glycosylated (N-linked (GlcNAc...) asparagine). A helical membrane pass occupies residues tyrosine 402–leucine 422. Residues glutamine 423–asparagine 437 lie on the Cytoplasmic side of the membrane.

Belongs to the DDOST 48 kDa subunit family. In terms of assembly, component of the oligosaccharyltransferase (OST) complex.

The protein localises to the endoplasmic reticulum. It is found in the membrane. It participates in protein modification; protein glycosylation. Its function is as follows. Subunit of the oligosaccharyl transferase (OST) complex that catalyzes the initial transfer of a defined glycan (Glc(3)Man(9)GlcNAc(2) in eukaryotes) from the lipid carrier dolichol-pyrophosphate to an asparagine residue within an Asn-X-Ser/Thr consensus motif in nascent polypeptide chains, the first step in protein N-glycosylation. N-glycosylation occurs cotranslationally and the complex associates with the Sec61 complex at the channel-forming translocon complex that mediates protein translocation across the endoplasmic reticulum (ER). All subunits are required for a maximal enzyme activity. The polypeptide is Dolichyl-diphosphooligosaccharide--protein glycosyltransferase subunit wbp1 (wbp1) (Schizosaccharomyces pombe (strain 972 / ATCC 24843) (Fission yeast)).